The chain runs to 193 residues: MLRLGIDIDGTITAQDTFVPYLNRSFNLSISLNDMTDYDLTKLLNITQEEFWDWMNQNEAIIYKEALLAQHAKQSLDLLKEEHKLIYITARRTHLTDITYEWFDRQNIHYDHIELVGGHHKVEAVKNHNIDLFFEDHHGNAMMIAKEAGIPVILFNSPYNQLPIDSNIIRVNNWLEAVQWMNNNKHHLIRVNN.

Belongs to the 5'(3')-deoxyribonucleotidase family.

This chain is Putative nucleotidase YqfW (yqfW), found in Bacillus subtilis (strain 168).